Reading from the N-terminus, the 441-residue chain is Cytochrome c biogenesis protein Ccs1 (441 aa).

A run of 3 helical transmembrane segments spans residues 19–39 (LKLA…GTVI), 78–98 (TWWF…CTLA), and 164–184 (IGPI…LLGN).

It belongs to the Ccs1/CcsB family. As to quaternary structure, may interact with CcsA.

The protein resides in the plastid. Its subcellular location is the chloroplast thylakoid membrane. Its function is as follows. Required during biogenesis of c-type cytochromes (cytochrome c6 and cytochrome f) at the step of heme attachment. In Rhodomonas salina (Cryptomonas salina), this protein is Cytochrome c biogenesis protein Ccs1.